We begin with the raw amino-acid sequence, 118 residues long: Inner membrane protein YhaI (118 aa).

Topologically, residues 1–25 (MQWYLSVLKNYVGFSGRARRKEYWM) are periplasmic. A helical membrane pass occupies residues 26-46 (FTLINAIVGAIINVIQLILGL). Residue E47 is a topological domain, cytoplasmic. Residues 48 to 68 (LPYLSMLYLLATFLPVLALAI) traverse the membrane as a helical segment. Residues 69-77 (RRLHDTDRS) lie on the Periplasmic side of the membrane. Residues 78 to 98 (GAWALLFFVPFIGWLVLLVFF) traverse the membrane as a helical segment. Residues 99 to 118 (CTEGTSGSNRYGNDPKFGSN) lie on the Cytoplasmic side of the membrane.

To E.coli YhaH.

The protein localises to the cell inner membrane. The polypeptide is Inner membrane protein YhaI (yhaI) (Escherichia coli O157:H7).